Consider the following 325-residue polypeptide: GMP reductase (325 aa).

The Thioimidate intermediate role is filled by Cys174. Residue 203-226 (IIADGGIRTNGDIAKSIRFGANMV) coordinates NADP(+).

Belongs to the IMPDH/GMPR family. GuaC type 2 subfamily.

The enzyme catalyses IMP + NH4(+) + NADP(+) = GMP + NADPH + 2 H(+). Its function is as follows. Catalyzes the irreversible NADPH-dependent deamination of GMP to IMP. It functions in the conversion of nucleobase, nucleoside and nucleotide derivatives of G to A nucleotides, and in maintaining the intracellular balance of A and G nucleotides. The sequence is that of GMP reductase from Latilactobacillus sakei subsp. sakei (strain 23K) (Lactobacillus sakei subsp. sakei).